Reading from the N-terminus, the 494-residue chain is 3-octaprenyl-4-hydroxybenzoate carboxy-lyase (494 aa).

Asn-172 is a Mn(2+) binding site. Prenylated FMN-binding positions include Ile-175–Arg-177, Arg-189–Leu-191, and Arg-194–Gly-195. Glu-238 provides a ligand contact to Mn(2+). Asp-287 (proton donor) is an active-site residue.

The protein belongs to the UbiD family. In terms of assembly, homohexamer. Prenylated FMN is required as a cofactor. The cofactor is Mn(2+).

It is found in the cell membrane. It catalyses the reaction a 4-hydroxy-3-(all-trans-polyprenyl)benzoate + H(+) = a 2-(all-trans-polyprenyl)phenol + CO2. Its pathway is cofactor biosynthesis; ubiquinone biosynthesis. Functionally, catalyzes the decarboxylation of 3-octaprenyl-4-hydroxy benzoate to 2-octaprenylphenol, an intermediate step in ubiquinone biosynthesis. This Escherichia coli O139:H28 (strain E24377A / ETEC) protein is 3-octaprenyl-4-hydroxybenzoate carboxy-lyase.